The primary structure comprises 286 residues: Beta-lactamase SHV-8 (286 aa).

The signal sequence occupies residues 1–21 (MRYIRLCIISLLATLPLAVHA). S66 (acyl-ester intermediate) is an active-site residue. A disulfide bridge links C73 with C119. The active-site Proton acceptor is E164. Residue 230-232 (KTG) participates in substrate binding.

The protein belongs to the class-A beta-lactamase family.

The catalysed reaction is a beta-lactam + H2O = a substituted beta-amino acid. Functionally, SHV enzymes hydrolyze broad spectrum cephalosporins notably cefotaxime and ceftazidime. The chain is Beta-lactamase SHV-8 (bla) from Escherichia coli.